We begin with the raw amino-acid sequence, 299 residues long: ATP phosphoribosyltransferase (299 aa).

The protein belongs to the ATP phosphoribosyltransferase family. Long subfamily. In terms of assembly, equilibrium between an active dimeric form, an inactive hexameric form and higher aggregates. Interconversion between the various forms is largely reversible and is influenced by the natural substrates and inhibitors of the enzyme. It depends on Mg(2+) as a cofactor.

The protein resides in the cytoplasm. It carries out the reaction 1-(5-phospho-beta-D-ribosyl)-ATP + diphosphate = 5-phospho-alpha-D-ribose 1-diphosphate + ATP. It functions in the pathway amino-acid biosynthesis; L-histidine biosynthesis; L-histidine from 5-phospho-alpha-D-ribose 1-diphosphate: step 1/9. With respect to regulation, feedback inhibited by histidine. Functionally, catalyzes the condensation of ATP and 5-phosphoribose 1-diphosphate to form N'-(5'-phosphoribosyl)-ATP (PR-ATP). Has a crucial role in the pathway because the rate of histidine biosynthesis seems to be controlled primarily by regulation of HisG enzymatic activity. This Proteus mirabilis (strain HI4320) protein is ATP phosphoribosyltransferase.